Reading from the N-terminus, the 213-residue chain is LexA repressor 2 (213 aa).

The segment at residues 27–47 is a DNA-binding region (H-T-H motif); it reads QTEIARAFGFKGVRAAQYHLE. Residues Ser133 and Lys170 each act as for autocatalytic cleavage activity in the active site.

It belongs to the peptidase S24 family. Homodimer.

It catalyses the reaction Hydrolysis of Ala-|-Gly bond in repressor LexA.. Represses a number of genes involved in the response to DNA damage (SOS response), including recA and lexA. In the presence of single-stranded DNA, RecA interacts with LexA causing an autocatalytic cleavage which disrupts the DNA-binding part of LexA, leading to derepression of the SOS regulon and eventually DNA repair. The chain is LexA repressor 2 from Xanthomonas oryzae pv. oryzae (strain KACC10331 / KXO85).